We begin with the raw amino-acid sequence, 125 residues long: Large ribosomal subunit protein mL51 (125 aa).

Residues 1–29 constitute a mitochondrion transit peptide; the sequence is MWSVQKLLWGCRSLLPQGCRSFSLGNRDL.

This sequence belongs to the mitochondrion-specific ribosomal protein mL51 family. Component of the mitochondrial ribosome large subunit (39S) which comprises a 16S rRNA and about 50 distinct proteins.

It localises to the mitochondrion. The sequence is that of Large ribosomal subunit protein mL51 (mrpl51) from Xenopus laevis (African clawed frog).